Here is a 204-residue protein sequence, read N- to C-terminus: uncharacterized protein (204 aa).

His-9 acts as the Tele-phosphohistidine intermediate in catalysis. Glu-86 functions as the Proton donor/acceptor in the catalytic mechanism.

The protein belongs to the phosphoglycerate mutase family.

This is an uncharacterized protein from Acanthamoeba polyphaga (Amoeba).